The chain runs to 55 residues: Protein CADMIUM TOLERANCE 1 (55 aa).

Residues G24–Y40 form a helical membrane-spanning segment.

It belongs to the CYSTM1 family.

It localises to the cell membrane. The protein localises to the secreted. It is found in the cell wall. Functionally, confers resistance to heavy metal ions (e.g. cadmium (CdCl(2)) and copper (CuCl(2))) by chelating them at the plasma membrane of root cells, thus stopping their entry and reducing their accumulation. This chain is Protein CADMIUM TOLERANCE 1, found in Echinochloa crus-galli subsp. caudata (Cockspur).